Consider the following 439-residue polypeptide: Ribosomal protein uS12 methylthiotransferase RimO (439 aa).

The MTTase N-terminal domain maps to 5-117 (KKLHLISLGC…IDELIASKQS (113 aa)). Residues C14, C48, C80, C149, C153, and C156 each coordinate [4Fe-4S] cluster. Positions 135–363 (TGSNYHAYIK…GEIAERSTLR (229 aa)) constitute a Radical SAM core domain. Residues 366-437 (EKMVGKTVEL…GMQLLATLIK (72 aa)) enclose the TRAM domain.

This sequence belongs to the methylthiotransferase family. RimO subfamily. The cofactor is [4Fe-4S] cluster.

It localises to the cytoplasm. It catalyses the reaction L-aspartate(89)-[ribosomal protein uS12]-hydrogen + (sulfur carrier)-SH + AH2 + 2 S-adenosyl-L-methionine = 3-methylsulfanyl-L-aspartate(89)-[ribosomal protein uS12]-hydrogen + (sulfur carrier)-H + 5'-deoxyadenosine + L-methionine + A + S-adenosyl-L-homocysteine + 2 H(+). Functionally, catalyzes the methylthiolation of an aspartic acid residue of ribosomal protein uS12. The protein is Ribosomal protein uS12 methylthiotransferase RimO of Sulfurovum sp. (strain NBC37-1).